Reading from the N-terminus, the 296-residue chain is Vacuolar histidine transporter YPQ3 (296 aa).

The Vacuolar portion of the chain corresponds to 1–12 (MKLIPIILNAKN). The PQ-loop 1 domain maps to 10–76 (AKNLSGMAGS…QNLLPTMIIL (67 aa)). The helical transmembrane segment at 13 to 33 (LSGMAGSISICCWIVVFVPQI) threads the bilayer. Residues 34 to 44 (YENFRRQSAEG) are Cytoplasmic-facing. The helical transmembrane segment at 45–65 (LSLLFIVLWLLGDIFNVMGAM) threads the bilayer. The Vacuolar segment spans residues 66 to 68 (MQN). The helical transmembrane segment at 69–89 (LLPTMIILAAYYTLADLILLI) threads the bilayer. Residues 90-163 (QCMWYDKEKK…RTIVVKEREN (74 aa)) are Cytoplasmic-facing. The helical transmembrane segment at 164 to 184 (FFNDFLIVSGVLIAGILSWYI) threads the bilayer. Topologically, residues 185 to 199 (SYCSGLDNGIPKKKP) are vacuolar. The helical transmembrane segment at 200 to 220 (AFEQINLPAQILGYLSAILYL) threads the bilayer. The region spanning 208–270 (AQILGYLSAI…ASWLIGSAGT (63 aa)) is the PQ-loop 2 domain. Over 221 to 238 (GSRIPQIVLNFKRKSCEG) the chain is Cytoplasmic. A helical membrane pass occupies residues 239–259 (VSFLFFLFACLGNTSFIISVL). The Vacuolar segment spans residues 260–262 (SAS). The helical transmembrane segment at 263–283 (WLIGSAGTLLMDFTVFIQFFL) threads the bilayer. Residues 284 to 296 (YAKPKYEKILIDN) are Cytoplasmic-facing.

Belongs to the laat-1 family.

The protein resides in the vacuole membrane. It is found in the mitochondrion membrane. Functionally, amino acid transporter that moves histidine into the vacuole. May also contribute to low affinity arginine import into the vacuole. May function as an amino acid/proton antiporter. This chain is Vacuolar histidine transporter YPQ3, found in Saccharomyces cerevisiae (strain ATCC 204508 / S288c) (Baker's yeast).